A 193-amino-acid polypeptide reads, in one-letter code: Ectoine TRAP transporter small permease protein TeaB (193 aa).

Helical transmembrane passes span 33-55 (ILAL…RFAL), 65-82 (VNRI…GYAA), 103-125 (RALM…YYSV), and 145-167 (IFII…LFTA).

This sequence belongs to the TRAP transporter small permease family. As to quaternary structure, the complex comprises the extracytoplasmic solute receptor protein TeaA, and the two transmembrane proteins TeaB and TeaC.

It localises to the cell inner membrane. Part of the tripartite ATP-independent periplasmic (TRAP) transport system TeaABC involved in the uptake of ectoine and hydroxyectoine in response to osmotic upshock. Probably functions as a recovery system for synthesized ectoine that leaks out of the cell. The protein is Ectoine TRAP transporter small permease protein TeaB (teaB) of Halomonas elongata (strain ATCC 33173 / DSM 2581 / NBRC 15536 / NCIMB 2198 / 1H9).